The following is a 73-amino-acid chain: Conotoxin Gla(3)-TxVI (73 aa).

The signal sequence occupies residues 1–19 (MQKLIILLLVAAVLMSAQA). Residues 20–44 (VLQEKRPKEKIKFLSKRKTDAEKQQ) constitute a propeptide that is removed on maturation. 3 cysteine pairs are disulfide-bonded: Cys-48-Cys-62, Cys-55-Cys-66, and Cys-61-Cys-71. Pro-49 carries the 4-hydroxyproline modification. Glu-53 carries the post-translational modification 4-carboxyglutamate; partial. Pro-54 is subject to 4-hydroxyproline. Glu-60 is modified (4-carboxyglutamate). Position 64 is a 6'-bromotryptophan (Trp-64).

This sequence belongs to the conotoxin O2 superfamily. Expressed by the venom duct.

The protein resides in the secreted. The chain is Conotoxin Gla(3)-TxVI from Conus textile (Cloth-of-gold cone).